The sequence spans 433 residues: Histidinol dehydrogenase (433 aa).

NAD(+) is bound by residues tyrosine 133, glutamine 194, and asparagine 217. Residues serine 240, glutamine 262, and histidine 265 each contribute to the substrate site. Residues glutamine 262 and histidine 265 each contribute to the Zn(2+) site. Active-site proton acceptor residues include glutamate 330 and histidine 331. Substrate is bound by residues histidine 331, aspartate 364, glutamate 418, and histidine 423. Zn(2+) is bound at residue aspartate 364. Histidine 423 serves as a coordination point for Zn(2+).

It belongs to the histidinol dehydrogenase family. It depends on Zn(2+) as a cofactor.

It catalyses the reaction L-histidinol + 2 NAD(+) + H2O = L-histidine + 2 NADH + 3 H(+). It participates in amino-acid biosynthesis; L-histidine biosynthesis; L-histidine from 5-phospho-alpha-D-ribose 1-diphosphate: step 9/9. Catalyzes the sequential NAD-dependent oxidations of L-histidinol to L-histidinaldehyde and then to L-histidine. In Hydrogenovibrio crunogenus (strain DSM 25203 / XCL-2) (Thiomicrospira crunogena), this protein is Histidinol dehydrogenase.